Consider the following 258-residue polypeptide: Sugar fermentation stimulation protein homolog (258 aa).

It belongs to the SfsA family.

The polypeptide is Sugar fermentation stimulation protein homolog (Marinomonas sp. (strain MWYL1)).